The primary structure comprises 421 residues: Glutamyl-tRNA reductase (421 aa).

Residues 49–52 (TCNR), serine 109, 114–116 (EPQ), and glutamine 120 contribute to the substrate site. The active-site Nucleophile is cysteine 50. 189–194 (GLGQIG) serves as a coordination point for NADP(+).

It belongs to the glutamyl-tRNA reductase family. Homodimer.

It catalyses the reaction (S)-4-amino-5-oxopentanoate + tRNA(Glu) + NADP(+) = L-glutamyl-tRNA(Glu) + NADPH + H(+). The protein operates within porphyrin-containing compound metabolism; protoporphyrin-IX biosynthesis; 5-aminolevulinate from L-glutamyl-tRNA(Glu): step 1/2. Catalyzes the NADPH-dependent reduction of glutamyl-tRNA(Glu) to glutamate 1-semialdehyde (GSA). This chain is Glutamyl-tRNA reductase, found in Limosilactobacillus reuteri (strain DSM 20016) (Lactobacillus reuteri).